Reading from the N-terminus, the 327-residue chain is tRNA uridine(34) hydroxylase (327 aa).

One can recognise a Rhodanese domain in the interval 122 to 218; it reads QENRCLVLDV…YGLKMGTGKW (97 aa). The active-site Cysteine persulfide intermediate is Cys178.

This sequence belongs to the TrhO family.

The enzyme catalyses uridine(34) in tRNA + AH2 + O2 = 5-hydroxyuridine(34) in tRNA + A + H2O. Functionally, catalyzes oxygen-dependent 5-hydroxyuridine (ho5U) modification at position 34 in tRNAs. This chain is tRNA uridine(34) hydroxylase, found in Chlamydia trachomatis serovar L2 (strain ATCC VR-902B / DSM 19102 / 434/Bu).